The following is a 229-amino-acid chain: MFEKLQDVLCYRFADVRLLETALTHSSYANERGTEIEHNERLEYLGDAVLELTVSEQLFTRFPEAREGQLTRMRARLVSKPSLAELARELKLDTYLLLGKGEESQGGRTRSSVLSDAFEAILGAIFLDGGYAAAGKTVLHVFSSRWPQGAEAARTKDAKSTLQELTQRLFKERPVYTLLGSSGPEHEKIFKVRLLLPDGRALETEGQSVKRAEQKAAGLALELLEGESA.

In terms of domain architecture, RNase III spans 2 to 130 (FEKLQDVLCY…ILGAIFLDGG (129 aa)). Mg(2+) is bound at residue Glu-43. The active site involves Asp-47. Mg(2+) is bound by residues Asp-116 and Glu-119. Glu-119 is an active-site residue. The DRBM domain maps to 157–226 (DAKSTLQELT…AGLALELLEG (70 aa)).

It belongs to the ribonuclease III family. In terms of assembly, homodimer. Mg(2+) serves as cofactor.

Its subcellular location is the cytoplasm. The enzyme catalyses Endonucleolytic cleavage to 5'-phosphomonoester.. Its function is as follows. Digests double-stranded RNA. Involved in the processing of primary rRNA transcript to yield the immediate precursors to the large and small rRNAs (23S and 16S). Processes some mRNAs, and tRNAs when they are encoded in the rRNA operon. Processes pre-crRNA and tracrRNA of type II CRISPR loci if present in the organism. The protein is Ribonuclease 3 of Oleidesulfovibrio alaskensis (strain ATCC BAA-1058 / DSM 17464 / G20) (Desulfovibrio alaskensis).